A 175-amino-acid polypeptide reads, in one-letter code: uncharacterized protein (175 aa).

The disordered stretch occupies residues 113–175 (AQLPRDSRGN…RTRSGGLERL (63 aa)).

This is an uncharacterized protein from Bos taurus (Bovine).